A 267-amino-acid chain; its full sequence is Transcription factor HES-1-A (267 aa).

The tract at residues 1–43 is disordered; that stretch reads MPADVMEKNSSSPVAATPASVSNTPDKPKTASEHRKSSKPIME. A compositionally biased stretch (low complexity) spans 10–22; that stretch reads SSSPVAATPASVS. A compositionally biased stretch (basic and acidic residues) spans 26 to 35; sequence DKPKTASEHR. The region spanning 34 to 91 is the bHLH domain; it reads HRKSSKPIMEKRRRARINESLGQLKTLILDALKKDSSRHSKLEKADILEMTVKHLRNL. An Orange domain is found at 110 to 143; that stretch reads YRAGFSECMNEVTRFLSTCEGVNTDVRTRLLGHL. A WRPW motif motif is present at residues 264–267; the sequence is WRPW.

As to quaternary structure, transcription repression requires formation of a complex with a corepressor protein of the Groucho/TLE family. Interacts with the bHLH protein hes2, and binds DNA in the form of a heterodimer with the bHLH protein hey1/hrt1. Interacts with the bHLH protein hes6; this interaction may inhibit the transcriptional repressor activity. In terms of tissue distribution, starting from late neurula stage, weakly expressed in midline neural cells, where expression is restricted to the superficial layer of the prospective floorplate. Expressed in the posterior somitic mesoderm (PSM) at tailbud stage. During early tailbud stages, broadly expressed within the pronephric mesoderm both around and inside the developing pronephros. During late tailbud to early tadpole stages, expressed more ventrally in the pronephros, and although initially expressed in both the lateral and medial layers, by these later stages expression is predominantly in the lateral layer. Pronephric expression is no longer detectable in late tadpoles (stage 35).

The protein localises to the nucleus. Transcriptional repressor of a subset of early mesodermal genes including myod1 and t/bra. Binds DNA on N-box motifs: 5'-CACNAG-3'. Acts as a negative regulator of myogenesis, mediating Notch signaling to repress expression of myod1. The protein is Transcription factor HES-1-A (hes1-a) of Xenopus laevis (African clawed frog).